A 455-amino-acid chain; its full sequence is Probable glucarate dehydratase (455 aa).

Substrate contacts are provided by His-42, Thr-113, Tyr-160, and Lys-215. The active-site Proton acceptor is the Lys-217. Positions 245, 276, and 299 each coordinate Mg(2+). 245–247 (DPN) is a substrate binding site. Residues Asn-299, 349 to 351 (HSN), His-378, and Arg-431 each bind substrate. His-349 functions as the Proton acceptor in the catalytic mechanism.

The protein belongs to the mandelate racemase/muconate lactonizing enzyme family. GlucD subfamily. Mg(2+) serves as cofactor.

The catalysed reaction is D-glucarate = 5-dehydro-4-deoxy-D-glucarate + H2O. The protein operates within carbohydrate acid metabolism; D-glucarate degradation; 2,5-dioxopentanoate from D-glucarate: step 1/2. Functionally, catalyzes the dehydration of glucarate to 5-keto-4-deoxy-D-glucarate (5-kdGluc). This Bacillus subtilis (strain 168) protein is Probable glucarate dehydratase (gudD).